Reading from the N-terminus, the 378-residue chain is UPF0754 membrane protein BCAH187_A1042 (378 aa).

A run of 2 helical transmembrane segments spans residues 1 to 21 (MNIW…GGFT) and 357 to 377 (YLGA…LLFL).

Belongs to the UPF0754 family.

Its subcellular location is the cell membrane. The protein is UPF0754 membrane protein BCAH187_A1042 of Bacillus cereus (strain AH187).